The following is a 1012-amino-acid chain: RAS protein activator like-3 (1012 aa).

Disordered regions lie at residues 1–128 (MDPP…TPDV), 147–196 (GNED…QIHN), and 208–229 (KKAKSELGASASRDGPPSALGS). The span at 7-21 (SRASQTQPVAPSPLT) shows a compositional bias: polar residues. Residue Ser-18 is modified to Phosphoserine. Residues 27–39 (SGGGAEKGAGGFR) are compositionally biased toward gly residues. Polar residues predominate over residues 50–62 (QSHQETTASSQPA). Ser-51 carries the phosphoserine modification. Residues 100–113 (SEPEPENPEPEPEL) are compositionally biased toward acidic residues. 4 positions are modified to phosphoserine: Ser-160, Ser-162, Ser-163, and Ser-166. A compositionally biased stretch (low complexity) spans 160 to 171 (SASSESSIHVAS). The segment covering 175 to 186 (KDPDRTPGKTDP) has biased composition (basic and acidic residues). The region spanning 193-294 (QIHNVRGLLK…WIEDLRRHFQ (102 aa)) is the PH domain. Phosphoserine occurs at positions 212, 225, 229, and 232. A Phosphothreonine modification is found at Thr-235. Residues 285–405 (WIEDLRRHFQ…APAAGLERWF (121 aa)) enclose the C2 domain. In terms of domain architecture, Ras-GAP spans 475–683 (GRAQALVTDL…PAMQHFLDQV (209 aa)). Positions 752–887 (PAPRTQGHSS…DKDQALGTHR (136 aa)) are disordered. Residues Ser-788 and Ser-791 each carry the phosphoserine modification. Basic residues predominate over residues 826–841 (PARRRPSAGPRPRPKG). A coiled-coil region spans residues 889–989 (VGKLAELQCE…KDTIQNLQLL (101 aa)). The segment covering 990–999 (PRTSESQSQP) has biased composition (polar residues). Positions 990-1012 (PRTSESQSQPVPLKAPCINGDTT) are disordered.

Its subcellular location is the cytoplasm. It is found in the cell cortex. Its function is as follows. Functions as a Ras GTPase-activating protein. Plays an important role in the expansion and functions of natural killer T (NKT) cells in the liver by negatively regulating RAS activity and the down-stream ERK signaling pathway. This Bos taurus (Bovine) protein is RAS protein activator like-3 (RASAL3).